The sequence spans 645 residues: Translation factor GUF1, mitochondrial (645 aa).

A tr-type G domain is found at 44 to 228 (ENYRNFSIVA…AIIDRIPPPT (185 aa)). GTP is bound by residues 53–60 (AHVDHGKS), 120–124 (DTPGH), and 174–177 (NKID).

Belongs to the TRAFAC class translation factor GTPase superfamily. Classic translation factor GTPase family. LepA subfamily.

Its subcellular location is the mitochondrion inner membrane. The catalysed reaction is GTP + H2O = GDP + phosphate + H(+). Promotes mitochondrial protein synthesis. May act as a fidelity factor of the translation reaction, by catalyzing a one-codon backward translocation of tRNAs on improperly translocated ribosomes. Binds to mitochondrial ribosomes in a GTP-dependent manner. The protein is Translation factor GUF1, mitochondrial of Saccharomyces cerevisiae (strain RM11-1a) (Baker's yeast).